The following is a 132-amino-acid chain: Small ribosomal subunit protein uS8c (132 aa).

Belongs to the universal ribosomal protein uS8 family. Part of the 30S ribosomal subunit.

The protein localises to the plastid. Its subcellular location is the chloroplast. One of the primary rRNA binding proteins, it binds directly to 16S rRNA central domain where it helps coordinate assembly of the platform of the 30S subunit. The sequence is that of Small ribosomal subunit protein uS8c (rps8) from Spirogyra maxima (Green alga).